Reading from the N-terminus, the 299-residue chain is Dihydroorotate dehydrogenase B (NAD(+)), catalytic subunit (299 aa).

Residues serine 21 and 44 to 45 (KS) each bind FMN. Substrate is bound by residues lysine 44, 68-72 (NAVGL), and asparagine 125. Asparagine 125 provides a ligand contact to FMN. Cysteine 128 acts as the Nucleophile in catalysis. Position 163 (lysine 163) interacts with FMN. Residue 189-190 (NT) coordinates substrate. FMN is bound by residues glycine 214, 240–241 (GG), and 262–263 (GS).

This sequence belongs to the dihydroorotate dehydrogenase family. Type 1 subfamily. Heterotetramer of 2 PyrK and 2 PyrD type B subunits. FMN is required as a cofactor.

The protein localises to the cytoplasm. The catalysed reaction is (S)-dihydroorotate + NAD(+) = orotate + NADH + H(+). It participates in pyrimidine metabolism; UMP biosynthesis via de novo pathway; orotate from (S)-dihydroorotate (NAD(+) route): step 1/1. Catalyzes the conversion of dihydroorotate to orotate with NAD(+) as electron acceptor. This Archaeoglobus fulgidus (strain ATCC 49558 / DSM 4304 / JCM 9628 / NBRC 100126 / VC-16) protein is Dihydroorotate dehydrogenase B (NAD(+)), catalytic subunit (pyrD).